A 498-amino-acid polypeptide reads, in one-letter code: Glycerol kinase 1 (498 aa).

Threonine 12 serves as a coordination point for ADP. 3 residues coordinate ATP: threonine 12, threonine 13, and serine 14. Threonine 12 lines the sn-glycerol 3-phosphate pocket. An ADP-binding site is contributed by arginine 16. Arginine 82, glutamate 83, tyrosine 134, and aspartate 243 together coordinate sn-glycerol 3-phosphate. The glycerol site is built by arginine 82, glutamate 83, tyrosine 134, aspartate 243, and glutamine 244. Residues threonine 265 and glycine 308 each coordinate ADP. Threonine 265, glycine 308, glutamine 312, and glycine 409 together coordinate ATP. 2 residues coordinate ADP: glycine 409 and asparagine 413.

It belongs to the FGGY kinase family. In terms of assembly, homotetramer and homodimer (in equilibrium).

The catalysed reaction is glycerol + ATP = sn-glycerol 3-phosphate + ADP + H(+). Its pathway is polyol metabolism; glycerol degradation via glycerol kinase pathway; sn-glycerol 3-phosphate from glycerol: step 1/1. With respect to regulation, activated by phosphorylation and inhibited by fructose 1,6-bisphosphate (FBP). Key enzyme in the regulation of glycerol uptake and metabolism. Catalyzes the phosphorylation of glycerol to yield sn-glycerol 3-phosphate. The sequence is that of Glycerol kinase 1 from Clostridium tetani (strain Massachusetts / E88).